The chain runs to 997 residues: Translation initiation factor IF-2 (997 aa).

The tract at residues 36-415 is disordered; the sequence is SMAGSLTTEE…ATQPLKAAKR (380 aa). Basic and acidic residues-rich tracts occupy residues 45–65 and 94–107; these read EAARVREHFAEQKQADAERSG and AREEVAPPAEEKPA. The segment covering 108 to 126 has biased composition (low complexity); sequence AVEAPAQAEPVAEAPAASP. Residues 127–147 show a composition bias toward basic and acidic residues; sequence HKVEEKAAPEAAKAEPAEKAK. Residues 151–162 show a composition bias toward low complexity; the sequence is ARVVSAARVISR. Basic and acidic residues predominate over residues 163 to 181; it reads PGEEEEKKPEPVVESKPEP. Positions 182 to 196 are enriched in low complexity; that stretch reads VAEISPVAAALAARE. 2 stretches are compositionally biased toward basic and acidic residues: residues 197-214 and 241-252; these read AAARAEEKSSEKGEEKGA and PEARTEAWKDAD. The segment covering 300-309 has biased composition (gly residues); that stretch reads GRPGAPGGPR. The segment covering 316–335 has biased composition (pro residues); it reads PPRPGGPRPSGPGGPRPAGG. A compositionally biased stretch (basic and acidic residues) spans 378-388; that stretch reads GGRRDDDDSQR. Over residues 390-399 the composition is skewed to basic residues; sequence NRGKGRRKGG. The 170-residue stretch at 496-665 folds into the tr-type G domain; that stretch reads PRPPVVTIMG…ALQSEIMELK (170 aa). Residues 505–512 are G1; sequence GHVDHGKT. 505-512 provides a ligand contact to GTP; the sequence is GHVDHGKT. Residues 530 to 534 are G2; it reads GITQH. A G3 region spans residues 551 to 554; the sequence is DTPG. GTP is bound by residues 551-555 and 605-608; these read DTPGH and NKMD. Residues 605–608 form a G4 region; the sequence is NKMD. A G5 region spans residues 641 to 643; the sequence is AAK.

The protein belongs to the TRAFAC class translation factor GTPase superfamily. Classic translation factor GTPase family. IF-2 subfamily.

It localises to the cytoplasm. Its function is as follows. One of the essential components for the initiation of protein synthesis. Protects formylmethionyl-tRNA from spontaneous hydrolysis and promotes its binding to the 30S ribosomal subunits. Also involved in the hydrolysis of GTP during the formation of the 70S ribosomal complex. This is Translation initiation factor IF-2 from Desulfovibrio desulfuricans (strain ATCC 27774 / DSM 6949 / MB).